Here is a 340-residue protein sequence, read N- to C-terminus: Methane monooxygenase component C (340 aa).

Residues M1–Y92 enclose the 2Fe-2S ferredoxin-type domain. [2Fe-2S] cluster-binding residues include C37, C41, C44, and C76. Residues Q101–H205 form the FAD-binding FR-type domain. Residue V215–R229 participates in FAD binding.

In terms of assembly, the soluble methane monooxygenase (sMMO) consists of four components A/MMOH (composed of alpha/MmoX, beta/MmoY and gamma/MmoZ), B/MMOB (MmoB), C/MMOR (MmoC) and D/MMOD (MmoD). [2Fe-2S] cluster is required as a cofactor.

It carries out the reaction methane + NADH + O2 + H(+) = methanol + NAD(+) + H2O. It catalyses the reaction methane + NADPH + O2 + H(+) = methanol + NADP(+) + H2O. Functionally, responsible for the initial oxygenation of methane to methanol in methanotrophs. It also catalyzes the monohydroxylation of a variety of unactivated alkenes, alicyclic, aromatic and heterocyclic compounds. The component C is the iron-sulfur flavoprotein of sMMO. This chain is Methane monooxygenase component C (mmoC), found in Methylosinus trichosporium.